We begin with the raw amino-acid sequence, 191 residues long: Adenylate kinase (191 aa).

ATP is bound at residue Gly10–Thr15. The interval Ser30–Val59 is NMP. AMP contacts are provided by residues Thr31, Arg36, Glu57–Val59, Gly83–Arg86, and Gln90. The LID stretch occupies residues Asn124–Asp140. Residue Arg125 participates in ATP binding. Residues Arg137 and Arg148 each contribute to the AMP site. Gly176 serves as a coordination point for ATP.

Belongs to the adenylate kinase family. Monomer.

Its subcellular location is the cytoplasm. It carries out the reaction AMP + ATP = 2 ADP. It participates in purine metabolism; AMP biosynthesis via salvage pathway; AMP from ADP: step 1/1. Functionally, catalyzes the reversible transfer of the terminal phosphate group between ATP and AMP. Plays an important role in cellular energy homeostasis and in adenine nucleotide metabolism. The sequence is that of Adenylate kinase from Jannaschia sp. (strain CCS1).